The chain runs to 591 residues: BRCA1-associated protein (591 aa).

Phosphoserine is present on Ser52. Over residues 82-93 (DEVRDTVEEKKP) the composition is skewed to basic and acidic residues. The disordered stretch occupies residues 82-124 (DEVRDTVEEKKPSAAPVSAQRSREQSESVNTAPESPSKQLPDQ). Positions 108–124 (ESVNTAPESPSKQLPDQ) are enriched in polar residues. Ser116 and Ser118 each carry phosphoserine. Residues 263-303 (CTVCLERMDESVNGILTTLCNHSFHSQCLQRWDDTTCPVCR) form an RING-type zinc finger. The UBP-type; degenerate zinc-finger motif lies at 300-392 (PVCRYCQTPE…GKIVQYECEG (93 aa)). Cys316, Cys319, Cys328, Cys331, Cys336, His343, His347, and His353 together coordinate Zn(2+). Positions 430–536 (EKDTAEEINN…EIQEQLRDVM (107 aa)) form a coiled coil. A disordered region spans residues 563–591 (IAMASAPNPPSSGAGGKLQSRKGRSKRGK). The span at 581–591 (QSRKGRSKRGK) shows a compositional bias: basic residues.

Interacts with the nuclear localization signal of BRCA1 and with the N-terminal of KSR1. The C-terminal portion of BRCA1 interacts with DDB1. Isoform 2 is highly expressed in testis, lower levels in brain, heart, lung, stomach, colon, uterus, liver and kidney. Isoform 1 is only expressed in the testis. Isoform 2 is predominant over isoform 1 in both fetal and adult testis.

The protein localises to the cytoplasm. The catalysed reaction is S-ubiquitinyl-[E2 ubiquitin-conjugating enzyme]-L-cysteine + [acceptor protein]-L-lysine = [E2 ubiquitin-conjugating enzyme]-L-cysteine + N(6)-ubiquitinyl-[acceptor protein]-L-lysine.. Its pathway is protein modification; protein ubiquitination. Functionally, negatively regulates MAP kinase activation by limiting the formation of Raf/MEK complexes probably by inactivation of the KSR1 scaffold protein. Also acts as a Ras responsive E3 ubiquitin ligase that, on activation of Ras, is modified by auto-polyubiquitination resulting in the release of inhibition of Raf/MEK complex formation. May also act as a cytoplasmic retention protein with a role in regulating nuclear transport. This chain is BRCA1-associated protein, found in Mus musculus (Mouse).